Reading from the N-terminus, the 62-residue chain is Photosystem II reaction center protein Z (62 aa).

Helical transmembrane passes span 8–28 (ALIA…VAYA) and 41–61 (YLGS…NFFV).

This sequence belongs to the PsbZ family. PSII is composed of 1 copy each of membrane proteins PsbA, PsbB, PsbC, PsbD, PsbE, PsbF, PsbH, PsbI, PsbJ, PsbK, PsbL, PsbM, PsbT, PsbX, PsbY, PsbZ, Psb30/Ycf12, peripheral proteins PsbO, CyanoQ (PsbQ), PsbU, PsbV and a large number of cofactors. It forms dimeric complexes.

It localises to the cellular thylakoid membrane. Functionally, may control the interaction of photosystem II (PSII) cores with the light-harvesting antenna, regulates electron flow through the 2 photosystem reaction centers. PSII is a light-driven water plastoquinone oxidoreductase, using light energy to abstract electrons from H(2)O, generating a proton gradient subsequently used for ATP formation. The protein is Photosystem II reaction center protein Z of Rippkaea orientalis (strain PCC 8801 / RF-1) (Cyanothece sp. (strain PCC 8801)).